The primary structure comprises 142 residues: Large ribosomal subunit protein uL13 (142 aa).

It belongs to the universal ribosomal protein uL13 family. As to quaternary structure, part of the 50S ribosomal subunit.

This protein is one of the early assembly proteins of the 50S ribosomal subunit, although it is not seen to bind rRNA by itself. It is important during the early stages of 50S assembly. The chain is Large ribosomal subunit protein uL13 from Wigglesworthia glossinidia brevipalpis.